The primary structure comprises 253 residues: Spermatogenesis-associated protein 9 (253 aa).

The helical transmembrane segment at 144–166 (LTSIMCASYAALIYLTVCVNAVL) threads the bilayer. Positions 210–228 (AKPYRSLPEKPDSISDRPK) are enriched in basic and acidic residues. The disordered stretch occupies residues 210–231 (AKPYRSLPEKPDSISDRPKLPA).

The protein resides in the membrane. Its function is as follows. May play at role in testicular development/spermatogenesis and may be an important factor in male infertility. The chain is Spermatogenesis-associated protein 9 (SPATA9) from Bos taurus (Bovine).